Reading from the N-terminus, the 370-residue chain is Protein-tyrosine sulfotransferase 1 (370 aa).

Topologically, residues 1 to 8 (MVGKLKQN) are cytoplasmic. The chain crosses the membrane as a helical; Signal-anchor for type II membrane protein span at residues 9-25 (LLLACLVISSVTVFYLG). Over 26 to 370 (QHAMECHHRI…KEKPQTEQVE (345 aa)) the chain is Lumenal. N-linked (GlcNAc...) asparagine glycosylation is present at Asn60. 79 to 83 (RSGTT) is a 3'-phosphoadenylyl sulfate binding site. A disulfide bond links Cys97 and Cys157. The active-site Proton donor/acceptor is the Glu100. The tract at residues 102-106 (RVIPR) is interaction with peptide substrate. Positions 184, 192, and 196 each coordinate 3'-phosphoadenylyl sulfate. A disulfide bond links Cys226 and Cys234. Residue Tyr239 participates in 3'-phosphoadenylyl sulfate binding. The N-linked (GlcNAc...) asparagine glycan is linked to Asn262. Residues 286-295 (STDQVIKPVN) and Lys301 each bind 3'-phosphoadenylyl sulfate.

This sequence belongs to the protein sulfotransferase family. Homodimer. Can also form heterodimers with TPST2. N-glycosylated. Ubiquitous. Detected in heart, brain, placenta, lung, liver, skeletal muscle, kidney and pancreas.

It is found in the golgi apparatus membrane. It carries out the reaction L-tyrosyl-[protein] + 3'-phosphoadenylyl sulfate = O-sulfo-L-tyrosine-[protein] + adenosine 3',5'-bisphosphate + H(+). In terms of biological role, catalyzes the O-sulfation of tyrosine residues within acidic motifs of polypeptides, using 3'-phosphoadenylyl sulfate (PAPS) as cosubstrate. The sequence is that of Protein-tyrosine sulfotransferase 1 (TPST1) from Homo sapiens (Human).